The chain runs to 314 residues: Methionyl-tRNA formyltransferase (314 aa).

Position 112–115 (112–115 (SLLP)) interacts with (6S)-5,6,7,8-tetrahydrofolate.

This sequence belongs to the Fmt family.

It carries out the reaction L-methionyl-tRNA(fMet) + (6R)-10-formyltetrahydrofolate = N-formyl-L-methionyl-tRNA(fMet) + (6S)-5,6,7,8-tetrahydrofolate + H(+). Functionally, attaches a formyl group to the free amino group of methionyl-tRNA(fMet). The formyl group appears to play a dual role in the initiator identity of N-formylmethionyl-tRNA by promoting its recognition by IF2 and preventing the misappropriation of this tRNA by the elongation apparatus. This is Methionyl-tRNA formyltransferase from Aeromonas salmonicida (strain A449).